We begin with the raw amino-acid sequence, 234 residues long: Peroxisomal coenzyme A diphosphatase ndx-8 (234 aa).

The region spanning 27–162 is the Nudix hydrolase domain; it reads EQDAGVLILL…TFLIDEFYMV (136 aa). Positions 66–90 match the Nudix box motif; the sequence is GGMMDDEDGQNVRRTAIREAYEEVG. Positions 84 and 88 each coordinate Mg(2+). A helical transmembrane segment spans residues 170–190; that stretch reads YPTTYGVTALMCIVVAIGLLG. A Microbody targeting signal motif is present at residues 232–234; sequence SKI.

The protein belongs to the Nudix hydrolase family. Mg(2+) is required as a cofactor. Mn(2+) serves as cofactor.

The protein localises to the peroxisome membrane. In terms of biological role, coenzyme A diphosphatase which mediates the cleavage of CoA into 3',5'-ADP and 4'-phosphopantetheine. The protein is Peroxisomal coenzyme A diphosphatase ndx-8 (ndx-8) of Caenorhabditis elegans.